The sequence spans 508 residues: Steroid 17-alpha-hydroxylase/17,20 lyase (508 aa).

Heme is bound at residue Cys442.

It belongs to the cytochrome P450 family. Heme is required as a cofactor.

The protein localises to the endoplasmic reticulum membrane. It localises to the microsome membrane. It carries out the reaction a C21-steroid + reduced [NADPH--hemoprotein reductase] + O2 = a 17alpha-hydroxy-C21-steroid + oxidized [NADPH--hemoprotein reductase] + H2O + H(+). The enzyme catalyses progesterone + reduced [NADPH--hemoprotein reductase] + O2 = 17alpha-hydroxyprogesterone + oxidized [NADPH--hemoprotein reductase] + H2O + H(+). It catalyses the reaction pregnenolone + reduced [NADPH--hemoprotein reductase] + O2 = 17alpha-hydroxypregnenolone + oxidized [NADPH--hemoprotein reductase] + H2O + H(+). The catalysed reaction is 17alpha-hydroxyprogesterone + reduced [NADPH--hemoprotein reductase] + O2 = androst-4-ene-3,17-dione + acetate + oxidized [NADPH--hemoprotein reductase] + H2O + 2 H(+). It carries out the reaction 17alpha-hydroxyprogesterone + reduced [NADPH--hemoprotein reductase] + O2 = 16alpha,17alpha-dihydroxyprogesterone + oxidized [NADPH--hemoprotein reductase] + H2O + H(+). The enzyme catalyses 16alpha,17alpha-dihydroxyprogesterone + reduced [NADPH--hemoprotein reductase] + O2 = 6beta,16alpha,17alpha-trihydroxyprogesterone + oxidized [NADPH--hemoprotein reductase] + H2O + H(+). It catalyses the reaction 17alpha-hydroxypregnenolone + reduced [NADPH--hemoprotein reductase] + O2 = 3beta-hydroxyandrost-5-en-17-one + acetate + oxidized [NADPH--hemoprotein reductase] + H2O + 2 H(+). The catalysed reaction is 16alpha,17alpha-dihydroxypregnenolone + reduced [NADPH--hemoprotein reductase] + O2 = 3beta,16alpha-dihydroxy-androst-5-en-17-one + acetate + oxidized [NADPH--hemoprotein reductase] + H2O + 2 H(+). It carries out the reaction 3beta-hydroxyandrost-5-en-17-one + reduced [NADPH--hemoprotein reductase] + O2 = 3beta,16alpha-dihydroxy-androst-5-en-17-one + oxidized [NADPH--hemoprotein reductase] + H2O + H(+). The enzyme catalyses androst-4-ene-3,17-dione + reduced [NADPH--hemoprotein reductase] + O2 = 16alpha-hydroxyandrost-4-ene-3,17-dione + oxidized [NADPH--hemoprotein reductase] + H2O + H(+). The protein operates within steroid hormone biosynthesis. It participates in steroid biosynthesis; glucocorticoid biosynthesis. Regulated predominantly by intracellular cAMP levels. The 17,20-lyase activity is stimulated by cytochrome b5, which acts as an allosteric effector increasing the Vmax of the lyase activity. In terms of biological role, a cytochrome P450 monooxygenase involved in corticoid and androgen biosynthesis. Catalyzes 17-alpha hydroxylation of C21 steroids, which is common for both pathways. A second oxidative step, required only for androgen synthesis, involves an acyl-carbon cleavage. The 17-alpha hydroxy intermediates, as part of adrenal glucocorticoids biosynthesis pathway, are precursors of cortisol. Hydroxylates steroid hormones, pregnenolone and progesterone to form 17-alpha hydroxy metabolites, followed by the cleavage of the C17-C20 bond to form C19 steroids, dehydroepiandrosterone (DHEA) and androstenedione. Has 16-alpha hydroxylase activity. Catalyzes 16-alpha hydroxylation of 17-alpha hydroxy pregnenolone, followed by the cleavage of the C17-C20 bond to form 16-alpha-hydroxy DHEA. Also 16-alpha hydroxylates androgens, relevant for estriol synthesis. Mechanistically, uses molecular oxygen inserting one oxygen atom into a substrate, and reducing the second into a water molecule, with two electrons provided by NADPH via cytochrome P450 reductase (CPR; NADPH-ferrihemoprotein reductase). In Equus caballus (Horse), this protein is Steroid 17-alpha-hydroxylase/17,20 lyase (CYP17A1).